Here is a 219-residue protein sequence, read N- to C-terminus: Ribosomal RNA small subunit methyltransferase I (219 aa).

Belongs to the methyltransferase superfamily. RsmI family.

The protein localises to the cytoplasm. The catalysed reaction is cytidine(1402) in 16S rRNA + S-adenosyl-L-methionine = 2'-O-methylcytidine(1402) in 16S rRNA + S-adenosyl-L-homocysteine + H(+). Functionally, catalyzes the 2'-O-methylation of the ribose of cytidine 1402 (C1402) in 16S rRNA. This Coprothermobacter proteolyticus (strain ATCC 35245 / DSM 5265 / OCM 4 / BT) protein is Ribosomal RNA small subunit methyltransferase I.